The sequence spans 224 residues: Transcription cofactor HES-6 (224 aa).

The interval 1 to 31 (MAPPAAPGRDRVGREDEDGWETRGDRKARKP) is disordered. Residues 8–25 (GRDRVGREDEDGWETRGD) are compositionally biased toward basic and acidic residues. A bHLH domain is found at 25-77 (DRKARKPLVEKKRRARINESLQELRLLLAGAEVQAKLENAEVLELTVRRVQGV). The Orange domain occupies 96–129 (FAAGYIQCMHEVHTFVSTCQAIDATVAAELLNHL). The segment covering 147 to 161 (DALAGPPRAPGRSGW) has biased composition (low complexity). The tract at residues 147 to 205 (DALAGPPRAPGRSGWPAGGAPGSPIPSPPGPGDDLCSDLEEAPEAELSQAPAEGPDLVP) is disordered. Acidic residues predominate over residues 181 to 190 (LCSDLEEAPE). Positions 221-224 (WRPW) match the WRPW motif motif.

As to quaternary structure, transcription repression requires formation of a complex with a corepressor protein of the Groucho/TLE family. Interacts with HES1.

The protein localises to the nucleus. Functionally, does not bind DNA itself but suppresses both HES1-mediated N box-dependent transcriptional repression and binding of HES1 to E box sequences. Also suppresses HES1-mediated inhibition of the heterodimer formed by ASCL1/MASH1 and TCF3/E47, allowing ASCL1 and TCF3 to up-regulate transcription in its presence. Promotes cell differentiation. The polypeptide is Transcription cofactor HES-6 (Homo sapiens (Human)).